Reading from the N-terminus, the 25-residue chain is Caerin-1.9 (25 aa).

Position 25 is a leucine amide (Leu-25).

Belongs to the frog skin active peptide (FSAP) family. Caerin subfamily. Expressed by the skin dorsal glands.

The protein localises to the secreted. Antimicrobial peptide. Adopts an alpha helical conformation which can disrupt bacterial membranes. Strongly inhibits the formation of NO by neuronal nitric oxide synthase (nNOS) at micromolar concentrations. Acts by a non-competitive mechanism, probably by binding to calcium/calmodulin and as a consequence blocking calmodulin attachment to nNOS. This chain is Caerin-1.9, found in Ranoidea chloris (Red-eyed tree frog).